Consider the following 197-residue polypeptide: MDMQSRIRRLFQASIDTKQQAMDILAPHIEQASLVMVNALLNEGKMLACGNGGSAGDAQHFSSELLNRFERERPSLPAIALTTDSSTLTSIANDYSYNEIFSKQIRALGQPGDVLLAISTSGNSANVIQAIQAAHDREMIVVALTGRDGGGMASLLLPEDVEIRVPSTVTARIQEVHLLAIHCLCDLIDSQLFGSEE.

The region spanning 36 to 197 (MVNALLNEGK…IDSQLFGSEE (162 aa)) is the SIS domain. 51–53 (NGG) lines the substrate pocket. Residues H60 and E64 each coordinate Zn(2+). Residues E64, 93-94 (ND), 119-121 (STS), S124, and Q174 contribute to the substrate site. Zn(2+) is bound by residues Q174 and H182.

It belongs to the SIS family. GmhA subfamily. As to quaternary structure, homotetramer. It depends on Zn(2+) as a cofactor.

The protein resides in the cytoplasm. It carries out the reaction 2 D-sedoheptulose 7-phosphate = D-glycero-alpha-D-manno-heptose 7-phosphate + D-glycero-beta-D-manno-heptose 7-phosphate. Its pathway is carbohydrate biosynthesis; D-glycero-D-manno-heptose 7-phosphate biosynthesis; D-glycero-alpha-D-manno-heptose 7-phosphate and D-glycero-beta-D-manno-heptose 7-phosphate from sedoheptulose 7-phosphate: step 1/1. In terms of biological role, catalyzes the isomerization of sedoheptulose 7-phosphate in D-glycero-D-manno-heptose 7-phosphate. This Pseudomonas putida (strain W619) protein is Phosphoheptose isomerase.